The following is a 378-amino-acid chain: Protein RecA (378 aa).

Position 79 to 86 (79 to 86) interacts with ATP; the sequence is GPESSGKT.

This sequence belongs to the RecA family.

The protein resides in the cytoplasm. In terms of biological role, can catalyze the hydrolysis of ATP in the presence of single-stranded DNA, the ATP-dependent uptake of single-stranded DNA by duplex DNA, and the ATP-dependent hybridization of homologous single-stranded DNAs. It interacts with LexA causing its activation and leading to its autocatalytic cleavage. The polypeptide is Protein RecA (Streptococcus pyogenes serotype M2 (strain MGAS10270)).